Here is a 108-residue protein sequence, read N- to C-terminus: Envelope small membrane protein (108 aa).

Residues 1-10 (MNLLNKSLEE) lie on the Virion surface side of the membrane. The chain crosses the membrane as a helical span at residues 11-31 (NGSFLTALYIIVGFLALYLLG). The Intravirion segment spans residues 32-108 (RALQAFVQAA…QDAQRDKLYS (77 aa)). The disordered stretch occupies residues 88 to 108 (NGWNNKNPANFQDAQRDKLYS). Over residues 89 to 100 (GWNNKNPANFQD) the composition is skewed to polar residues.

This sequence belongs to the gammacoronaviruses E protein family. As to quaternary structure, homooligomer. Interacts with the M membrane protein in the budding compartment of the host cell, which is located between endoplasmic reticulum and the Golgi complex. The cytoplasmic tails of both proteins are important for this function. Interacts with Nucleoprotein.

Its subcellular location is the host Golgi apparatus membrane. In terms of biological role, plays a central role in virus morphogenesis and assembly. Acts as a viroporin and self-assembles in host membranes forming pentameric protein-lipid pores that allow ion transport. Also plays a role in the induction of apoptosis. The protein is Envelope small membrane protein of Gallus gallus (Chicken).